Consider the following 515-residue polypeptide: 2,3-bisphosphoglycerate-independent phosphoglycerate mutase (515 aa).

Mn(2+) is bound by residues Asp14 and Ser64. Ser64 (phosphoserine intermediate) is an active-site residue. Substrate contacts are provided by residues His125, 155-156, Arg187, Arg193, 263-266, and Lys337; these read RD and RADR. The Mn(2+) site is built by Asp404, His408, Asp445, His446, and His464.

The protein belongs to the BPG-independent phosphoglycerate mutase family. Monomer. Requires Mn(2+) as cofactor.

It carries out the reaction (2R)-2-phosphoglycerate = (2R)-3-phosphoglycerate. The protein operates within carbohydrate degradation; glycolysis; pyruvate from D-glyceraldehyde 3-phosphate: step 3/5. Functionally, catalyzes the interconversion of 2-phosphoglycerate and 3-phosphoglycerate. The polypeptide is 2,3-bisphosphoglycerate-independent phosphoglycerate mutase (Pseudomonas aeruginosa (strain ATCC 15692 / DSM 22644 / CIP 104116 / JCM 14847 / LMG 12228 / 1C / PRS 101 / PAO1)).